We begin with the raw amino-acid sequence, 205 residues long: dITP/XTP pyrophosphatase (205 aa).

10-15 (TKNEGK) contacts substrate. Residues E44 and D73 each contribute to the Mg(2+) site. The active-site Proton acceptor is the D73. Residues S74, 156 to 159 (FGYD), K179, and 184 to 185 (HR) each bind substrate.

The protein belongs to the HAM1 NTPase family. In terms of assembly, homodimer. Mg(2+) serves as cofactor.

The catalysed reaction is XTP + H2O = XMP + diphosphate + H(+). The enzyme catalyses dITP + H2O = dIMP + diphosphate + H(+). It catalyses the reaction ITP + H2O = IMP + diphosphate + H(+). Its function is as follows. Pyrophosphatase that catalyzes the hydrolysis of nucleoside triphosphates to their monophosphate derivatives, with a high preference for the non-canonical purine nucleotides XTP (xanthosine triphosphate), dITP (deoxyinosine triphosphate) and ITP. Seems to function as a house-cleaning enzyme that removes non-canonical purine nucleotides from the nucleotide pool, thus preventing their incorporation into DNA/RNA and avoiding chromosomal lesions. The protein is dITP/XTP pyrophosphatase of Dictyoglomus thermophilum (strain ATCC 35947 / DSM 3960 / H-6-12).